The following is a 418-amino-acid chain: Serine hydroxymethyltransferase (418 aa).

(6S)-5,6,7,8-tetrahydrofolate contacts are provided by residues Leu121 and 125 to 127 (GHL). Lys230 carries the post-translational modification N6-(pyridoxal phosphate)lysine. A (6S)-5,6,7,8-tetrahydrofolate-binding site is contributed by 355 to 357 (SPF).

This sequence belongs to the SHMT family. In terms of assembly, homodimer. Pyridoxal 5'-phosphate serves as cofactor.

The protein resides in the cytoplasm. It catalyses the reaction (6R)-5,10-methylene-5,6,7,8-tetrahydrofolate + glycine + H2O = (6S)-5,6,7,8-tetrahydrofolate + L-serine. It functions in the pathway one-carbon metabolism; tetrahydrofolate interconversion. The protein operates within amino-acid biosynthesis; glycine biosynthesis; glycine from L-serine: step 1/1. Its function is as follows. Catalyzes the reversible interconversion of serine and glycine with tetrahydrofolate (THF) serving as the one-carbon carrier. This reaction serves as the major source of one-carbon groups required for the biosynthesis of purines, thymidylate, methionine, and other important biomolecules. Also exhibits THF-independent aldolase activity toward beta-hydroxyamino acids, producing glycine and aldehydes, via a retro-aldol mechanism. The sequence is that of Serine hydroxymethyltransferase from Methylococcus capsulatus (strain ATCC 33009 / NCIMB 11132 / Bath).